A 552-amino-acid polypeptide reads, in one-letter code: MTMEQEIEVLDQFPVGMRVLAVDDDQTCLRILQTLLQRCQYHVTTTNQAQTALELLRENKNKFDLVISDVDMPDMDGFKLLELVGLEMDLPVIMLSAHSDPKYVMKGVKHGACDYLLKPVRIEELKNIWQHVVRKSKLKKNKSNVSNGSGNCDKANRKRKEQYEEEEEEERGNDNDDPTAQKKPRVLWTHELHNKFLAAVDHLGVERAVPKKILDLMNVDKLTRENVASHLQKFRVALKKVSDDAIQQANRAAIDSHFMQMNSQKGLGGFYHHHRGIPVGSGQFHGGTTMMRHYSSNRNLGRLNSLGAGMFQPVSSSFPRNHNDGGNILQGLPLEELQINNNINRAFPSFTSQQNSPMVAPSNLLLLEGNPQSSSLPSNPGFSPHFEISKRLEHWSNAALSTNIPQSDVHSKPDTLEWNAFCDSASPLVNPNLDTNPASLCRNTGFGSTNAAQTDFFYPLQMNQQPANNSGPVTEAQLFRSSNPNEGLLMGQQKLQSGLMASDAGSLDDIVNSLMTQEQSQSDFSEGDWDLDGLAHSEHAYEKLHFPFSLSA.

The region spanning 18–133 (RVLAVDDDQT…ELKNIWQHVV (116 aa)) is the Response regulatory domain. D69 carries the 4-aspartylphosphate modification. Residues 139–181 (KKNKSNVSNGSGNCDKANRKRKEQYEEEEEEERGNDNDDPTAQ) form a disordered region. The stretch at 151 to 173 (NCDKANRKRKEQYEEEEEEERGN) forms a coiled coil. The span at 163 to 177 (YEEEEEEERGNDNDD) shows a compositional bias: acidic residues. The short motif at 182 to 185 (KKPR) is the Nuclear localization signal element. Residues 185–235 (RVLWTHELHNKFLAAVDHLGVERAVPKKILDLMNVDKLTRENVASHLQKFR) constitute a DNA-binding region (myb-like GARP).

Belongs to the ARR family. Type-B subfamily. Binds the target DNA as a monomer. Post-translationally, two-component system major event consists of a His-to-Asp phosphorelay between a sensor histidine kinase (HK) and a response regulator (RR). In plants, the His-to-Asp phosphorelay involves an additional intermediate named Histidine-containing phosphotransfer protein (HPt). This multistep phosphorelay consists of a His-Asp-His-Asp sequential transfer of a phosphate group between first a His and an Asp of the HK protein, followed by the transfer to a conserved His of the HPt protein and finally the transfer to an Asp in the receiver domain of the RR protein. Detected in the whole plant. Predominantly expressed in roots and leaves.

It is found in the nucleus. Functionally, transcriptional activator that binds specifically to the DNA sequence 5'-[AG]GATT-3'. Functions as a response regulator involved in His-to-Asp phosphorelay signal transduction system. Phosphorylation of the Asp residue in the receiver domain activates the ability of the protein to promote the transcription of target genes. Could directly activate some type-A response regulators in response to cytokinins. This chain is Two-component response regulator ARR10 (ARR10), found in Arabidopsis thaliana (Mouse-ear cress).